The primary structure comprises 301 residues: Bifunctional protein FolD (301 aa).

NADP(+)-binding positions include 166–168, Ser-191, and Ile-232; that span reads GKS.

The protein belongs to the tetrahydrofolate dehydrogenase/cyclohydrolase family. Homodimer.

The enzyme catalyses (6R)-5,10-methylene-5,6,7,8-tetrahydrofolate + NADP(+) = (6R)-5,10-methenyltetrahydrofolate + NADPH. It carries out the reaction (6R)-5,10-methenyltetrahydrofolate + H2O = (6R)-10-formyltetrahydrofolate + H(+). It functions in the pathway one-carbon metabolism; tetrahydrofolate interconversion. In terms of biological role, catalyzes the oxidation of 5,10-methylenetetrahydrofolate to 5,10-methenyltetrahydrofolate and then the hydrolysis of 5,10-methenyltetrahydrofolate to 10-formyltetrahydrofolate. The protein is Bifunctional protein FolD of Orientia tsutsugamushi (strain Ikeda) (Rickettsia tsutsugamushi).